Reading from the N-terminus, the 91-residue chain is Small ribosomal subunit protein uS19 (91 aa).

Belongs to the universal ribosomal protein uS19 family.

In terms of biological role, protein S19 forms a complex with S13 that binds strongly to the 16S ribosomal RNA. The protein is Small ribosomal subunit protein uS19 of Sphingopyxis alaskensis (strain DSM 13593 / LMG 18877 / RB2256) (Sphingomonas alaskensis).